The primary structure comprises 429 residues: Glutamate-1-semialdehyde 2,1-aminomutase (429 aa).

An N6-(pyridoxal phosphate)lysine modification is found at lysine 267.

Belongs to the class-III pyridoxal-phosphate-dependent aminotransferase family. HemL subfamily. As to quaternary structure, homodimer. Requires pyridoxal 5'-phosphate as cofactor.

Its subcellular location is the cytoplasm. The enzyme catalyses (S)-4-amino-5-oxopentanoate = 5-aminolevulinate. It participates in porphyrin-containing compound metabolism; protoporphyrin-IX biosynthesis; 5-aminolevulinate from L-glutamyl-tRNA(Glu): step 2/2. This is Glutamate-1-semialdehyde 2,1-aminomutase from Herpetosiphon aurantiacus (strain ATCC 23779 / DSM 785 / 114-95).